We begin with the raw amino-acid sequence, 161 residues long: Nucleotide-binding protein PFLU_4927 (161 aa).

It belongs to the YajQ family.

Functionally, nucleotide-binding protein. The sequence is that of Nucleotide-binding protein PFLU_4927 from Pseudomonas fluorescens (strain SBW25).